Here is a 297-residue protein sequence, read N- to C-terminus: Putative S-adenosyl-L-methionine-dependent methyltransferase MSMEG_0614/MSMEI_0598 (297 aa).

S-adenosyl-L-methionine is bound by residues D125 and 154-155; that span reads DL.

This sequence belongs to the UPF0677 family.

Its function is as follows. Exhibits S-adenosyl-L-methionine-dependent methyltransferase activity. The polypeptide is Putative S-adenosyl-L-methionine-dependent methyltransferase MSMEG_0614/MSMEI_0598 (Mycolicibacterium smegmatis (strain ATCC 700084 / mc(2)155) (Mycobacterium smegmatis)).